The primary structure comprises 427 residues: Gamma-glutamyl phosphate reductase (427 aa).

Belongs to the gamma-glutamyl phosphate reductase family.

It is found in the cytoplasm. The catalysed reaction is L-glutamate 5-semialdehyde + phosphate + NADP(+) = L-glutamyl 5-phosphate + NADPH + H(+). It participates in amino-acid biosynthesis; L-proline biosynthesis; L-glutamate 5-semialdehyde from L-glutamate: step 2/2. Catalyzes the NADPH-dependent reduction of L-glutamate 5-phosphate into L-glutamate 5-semialdehyde and phosphate. The product spontaneously undergoes cyclization to form 1-pyrroline-5-carboxylate. The sequence is that of Gamma-glutamyl phosphate reductase from Rhizobium rhizogenes (strain K84 / ATCC BAA-868) (Agrobacterium radiobacter).